The following is a 262-amino-acid chain: uncharacterized protein (262 aa).

A divalent metal cation contacts are provided by H7, H9, E96, H132, H156, and D211.

This sequence belongs to the metallo-dependent hydrolases superfamily. TatD-type hydrolase family. It depends on a divalent metal cation as a cofactor.

This is an uncharacterized protein from Mycoplasma genitalium (strain ATCC 33530 / DSM 19775 / NCTC 10195 / G37) (Mycoplasmoides genitalium).